The primary structure comprises 69 residues: Dermaseptin-H3 (69 aa).

An N-terminal signal peptide occupies residues 1-22; it reads MAFLKKSLFLVLFLGMVSLSIC. A propeptide spanning residues 23 to 43 is cleaved from the precursor; the sequence is EEEKRENEDEEKQEDDEQSEM. Residues 24-44 are disordered; that stretch reads EEKRENEDEEKQEDDEQSEMK. A compositionally biased stretch (acidic residues) spans 30-40; that stretch reads EDEEKQEDDEQ. Leu66 is subject to Leucine amide. The propeptide occupies 68–69; it reads EQ.

The protein belongs to the frog skin active peptide (FSAP) family. Dermaseptin subfamily. As to expression, expressed by the skin glands.

It is found in the secreted. In terms of biological role, possesses a potent antimicrobial activity against Gram-positive and Gram-negative bacteria. Probably acts by disturbing membrane functions with its amphipathic structure. The polypeptide is Dermaseptin-H3 (Pithecopus azureus (Orange-legged monkey tree frog)).